Here is a 346-residue protein sequence, read N- to C-terminus: Dehydrogenase orf1 (346 aa).

Valine 43 to glutamine 48 provides a ligand contact to NADP(+). Leucine 133–valine 140 is a substrate binding site. Residues alanine 170–valine 173, serine 193–asparagine 196, tyrosine 211, and leucine 251–asparagine 252 each bind NADP(+). Residue alanine 269–valine 273 participates in substrate binding. Valine 336–serine 337 contributes to the NADP(+) binding site.

This sequence belongs to the zinc-containing alcohol dehydrogenase family.

Its pathway is secondary metabolite biosynthesis. Its function is as follows. Dehydrogenase; part of the gene cluster that mediates the biosynthesis of nigerpyrone and its derivatives carbonarone A and pestalamide A. The biosynthesis pathway begins with the polyketide assembly by epaA to form phenylacetyl triketide precursor from successive condensation of two malonyl-CoA, presumably with one phenylacetyl-CoA starter unit produced by the phenylacetyl-CoA ligase epaB. For the nigerpyrone biosynthesis, the reactive polyketide chain is released as an aldehyde through the R-domain. A nonenzymatic cyclization and dehydration may create nigerpyrone. For the biosynthesis of carbonarone A and pestalamide A, an extra methyl group is added through the C-methyltransferase domain. Several further steps involving the dehydrogenase orf1, the cytochrome P450 monooxygenase orf2 and the FAD-dependent monooxygenase orf3 are required to form a carbonarone A precursor which is converted to carbonarone A via cyclization. The O-acetyltransferase epaC could catalyze the transfer of 2-methylsuccinyl-CoA, a common intermediate in the ethylmalonyl-CoA pathway, to generate the final product pestalamide A. This Aspergillus niger (strain ATCC MYA-4892 / CBS 513.88 / FGSC A1513) protein is Dehydrogenase orf1.